We begin with the raw amino-acid sequence, 178 residues long: Conodipine-P1 (178 aa).

Positions 1–24 (MKLLAPVLWAMAALGVTWLVAVDS) are cleaved as a signal peptide. 4-hydroxyproline; partial occurs at positions 38, 42, and 49. Residue His54 is part of the active site. Residues 98–130 (KREVTSHRATSIAHSRLWKTALDQKSFLNRKAR) constitute a propeptide, interchain peptide. Gln131 bears the Pyrrolidone carboxylic acid mark. Pro137 carries the post-translational modification 4-hydroxyproline; partial.

The protein belongs to the phospholipase A2 family. Group IX subfamily. As to quaternary structure, heterodimer of an alpha and a beta chain; probably disulfide-linked. Ca(2+) is required as a cofactor. In terms of tissue distribution, expressed by the venom duct.

It localises to the secreted. The enzyme catalyses a 1,2-diacyl-sn-glycero-3-phosphocholine + H2O = a 1-acyl-sn-glycero-3-phosphocholine + a fatty acid + H(+). Functionally, catalyzes the calcium-dependent hydrolysis of the 2-acyl groups in 3-sn-phosphoglycerides. The protein is Conodipine-P1 of Conus purpurascens (Purple cone).